The chain runs to 347 residues: tRNA pseudouridine synthase D (347 aa).

The Nucleophile role is filled by Asp81. The TRUD domain occupies 158–305; the sequence is GVPNYFGSQR…RHDRRDIALK (148 aa).

This sequence belongs to the pseudouridine synthase TruD family.

The enzyme catalyses uridine(13) in tRNA = pseudouridine(13) in tRNA. Its function is as follows. Responsible for synthesis of pseudouridine from uracil-13 in transfer RNAs. This is tRNA pseudouridine synthase D from Vibrio campbellii (strain ATCC BAA-1116).